We begin with the raw amino-acid sequence, 350 residues long: Protein RecA (350 aa).

Residue 67–74 (GPESSGKT) participates in ATP binding.

This sequence belongs to the RecA family.

It is found in the cytoplasm. Can catalyze the hydrolysis of ATP in the presence of single-stranded DNA, the ATP-dependent uptake of single-stranded DNA by duplex DNA, and the ATP-dependent hybridization of homologous single-stranded DNAs. It interacts with LexA causing its activation and leading to its autocatalytic cleavage. This is Protein RecA from Chlamydia felis (strain Fe/C-56) (Chlamydophila felis).